Consider the following 310-residue polypeptide: Tagatose-6-phosphate kinase (310 aa).

It belongs to the carbohydrate kinase PfkB family. LacC subfamily.

The catalysed reaction is D-tagatofuranose 6-phosphate + ATP = D-tagatofuranose 1,6-bisphosphate + ADP + H(+). It functions in the pathway carbohydrate metabolism; D-tagatose 6-phosphate degradation; D-glyceraldehyde 3-phosphate and glycerone phosphate from D-tagatose 6-phosphate: step 1/2. In Streptococcus mutans serotype c (strain ATCC 700610 / UA159), this protein is Tagatose-6-phosphate kinase.